A 218-amino-acid chain; its full sequence is Octanoyltransferase (218 aa).

The 174-residue stretch at 45–218 (AGTADELWLL…TDALQRAIYS (174 aa)) folds into the BPL/LPL catalytic domain. Substrate contacts are provided by residues 84–91 (RGGQITYH), 151–153 (ALG), and 164–166 (GLA). Residue C182 is the Acyl-thioester intermediate of the active site.

Belongs to the LipB family.

It localises to the cytoplasm. The enzyme catalyses octanoyl-[ACP] + L-lysyl-[protein] = N(6)-octanoyl-L-lysyl-[protein] + holo-[ACP] + H(+). The protein operates within protein modification; protein lipoylation via endogenous pathway; protein N(6)-(lipoyl)lysine from octanoyl-[acyl-carrier-protein]: step 1/2. Its function is as follows. Catalyzes the transfer of endogenously produced octanoic acid from octanoyl-acyl-carrier-protein onto the lipoyl domains of lipoate-dependent enzymes. Lipoyl-ACP can also act as a substrate although octanoyl-ACP is likely to be the physiological substrate. The chain is Octanoyltransferase from Thiobacillus denitrificans (strain ATCC 25259 / T1).